The following is a 418-amino-acid chain: Serine hydroxymethyltransferase (418 aa).

Residues leucine 121 and 125–127 (GHL) each bind (6S)-5,6,7,8-tetrahydrofolate. Residue lysine 230 is modified to N6-(pyridoxal phosphate)lysine. 355–357 (SPF) lines the (6S)-5,6,7,8-tetrahydrofolate pocket.

It belongs to the SHMT family. Homodimer. It depends on pyridoxal 5'-phosphate as a cofactor.

The protein localises to the cytoplasm. It carries out the reaction (6R)-5,10-methylene-5,6,7,8-tetrahydrofolate + glycine + H2O = (6S)-5,6,7,8-tetrahydrofolate + L-serine. Its pathway is one-carbon metabolism; tetrahydrofolate interconversion. It functions in the pathway amino-acid biosynthesis; glycine biosynthesis; glycine from L-serine: step 1/1. Its function is as follows. Catalyzes the reversible interconversion of serine and glycine with tetrahydrofolate (THF) serving as the one-carbon carrier. This reaction serves as the major source of one-carbon groups required for the biosynthesis of purines, thymidylate, methionine, and other important biomolecules. Also exhibits THF-independent aldolase activity toward beta-hydroxyamino acids, producing glycine and aldehydes, via a retro-aldol mechanism. This is Serine hydroxymethyltransferase from Streptococcus pyogenes serotype M5 (strain Manfredo).